The primary structure comprises 205 residues: GTP cyclohydrolase 1 (205 aa).

Zn(2+) is bound by residues Cys-94, His-97, and Cys-165.

The protein belongs to the GTP cyclohydrolase I family. As to quaternary structure, homomer.

It carries out the reaction GTP + H2O = 7,8-dihydroneopterin 3'-triphosphate + formate + H(+). Its pathway is cofactor biosynthesis; 7,8-dihydroneopterin triphosphate biosynthesis; 7,8-dihydroneopterin triphosphate from GTP: step 1/1. This Sinorhizobium fredii (strain NBRC 101917 / NGR234) protein is GTP cyclohydrolase 1.